Reading from the N-terminus, the 389-residue chain is Putative sugar efflux transporter DR_1322 (389 aa).

12 helical membrane passes run 10–30 (AVLLLGLATSLAGPFMSLFAV), 34–54 (GMTPLQLGLFLTFNALSAVLV), 69–89 (KPLVLLTLAAGVLAYLALSGV), 96–116 (MATGVLLLAVSSAAFPQVFAF), 135–155 (VLRAVFSFAWVVGPGVGAAVL), 161–181 (SGVFLLAALCYALAGLPLLFI), 211–231 (GWVVAAFTLYGMAMHMGMVMF), 246–266 (VGFLVGLCALLEIPVMLLFVL), 281–301 (LLLFVVHFALIYLAQGMPLLI), 308–328 (AAVLAVMAGLGMTYFQQLMPG), 341–361 (SVVGSMLSGIVAGAWAQVFGY), and 363–383 (PVFLLCAALSLAAWGMMLWAT).

Belongs to the major facilitator superfamily. Set transporter family.

The protein localises to the cell membrane. Involved in the efflux of sugars. The physiological role may be the detoxification of non-metabolizable sugar analogs. This Deinococcus radiodurans (strain ATCC 13939 / DSM 20539 / JCM 16871 / CCUG 27074 / LMG 4051 / NBRC 15346 / NCIMB 9279 / VKM B-1422 / R1) protein is Putative sugar efflux transporter DR_1322.